The sequence spans 139 residues: Putative pre-16S rRNA nuclease (139 aa).

The protein belongs to the YqgF nuclease family.

It localises to the cytoplasm. Could be a nuclease involved in processing of the 5'-end of pre-16S rRNA. The protein is Putative pre-16S rRNA nuclease of Streptococcus equi subsp. zooepidemicus (strain H70).